A 61-amino-acid polypeptide reads, in one-letter code: Putative antitoxin VapB13 (61 aa).

It belongs to the UPF0165 family.

Its function is as follows. Possibly the antitoxin component of a type II toxin-antitoxin (TA) system. Its cognate toxin is VapC13 (Potential). The protein is Putative antitoxin VapB13 (vapB13) of Archaeoglobus fulgidus (strain ATCC 49558 / DSM 4304 / JCM 9628 / NBRC 100126 / VC-16).